We begin with the raw amino-acid sequence, 509 residues long: MFS antiporter QDR1 (509 aa).

Over 1–41 (MPGNREEFDIEKVLKSKKLEAIETSTEKKAPYTVFESTDKL) the chain is Cytoplasmic. The helical transmembrane segment at 42–62 (LLIIVLSLVGFWSAISSPIYF) threads the bilayer. Residues 63–75 (PALPTLTKYFNTT) are Extracellular-facing. Residues 76 to 96 (PSVMNISVVAYLIFQGIAPTI) form a helical membrane-spanning segment. The Cytoplasmic portion of the chain corresponds to 97–106 (SSNLADTFGR). A helical membrane pass occupies residues 107-129 (RPVILGSIIVFCAVCIAISQTNV). At 130-132 (YWL) the chain is on the extracellular side. Residues 133–155 (LALLRCFQAAGIAPVFAISSGVA) form a helical membrane-spanning segment. Topologically, residues 156-169 (GDICTPANRGGMVG) are cytoplasmic. A helical transmembrane segment spans residues 170 to 190 (AVSGLQLAGNGIGGLVGAALI). Residues 191-197 (SGFHTWR) are Extracellular-facing. Residues 198–218 (AIFIFLAIGGGVTFIFAFLVL) form a helical membrane-spanning segment. The Cytoplasmic portion of the chain corresponds to 219 to 278 (AETSRRIVGNGSIRPKNVLNKAVLIYLPHFKNKITNDYSTLQPKGPFDILGPFKIFFQKE). A helical membrane pass occupies residues 279–299 (VFCTLLPSGMHFAAWTVSLTS). Over 300-312 (LSTELESAKYNYS) the chain is Extracellular. A helical membrane pass occupies residues 313 to 333 (VMKVGLVYLPQGIACFIGSLI). Residues 334–370 (AGRCLNWYYRYRKNLYDKQMNDVPLNDRPPFNLVASR) are Cytoplasmic-facing. A helical membrane pass occupies residues 371-391 (LTLTIVPLAMMVIGLSAFGWC). Over 392–397 (LEYKKP) the chain is Extracellular. Residues 398-418 (IISIIISTILISFSASVMMSI) form a helical membrane-spanning segment. The Cytoplasmic portion of the chain corresponds to 419 to 432 (CTTMLVDLYPKQSG). The helical transmembrane segment at 433–453 (ASASCVNLMRCWLAALFTGVL) threads the bilayer. Residues 454–455 (DK) are Extracellular-facing. A helical transmembrane segment spans residues 456–476 (IISALGLGGTYTLLTGICLLT). The Cytoplasmic segment spans residues 477 to 509 (DLGLVYVLYTANQRFVNYVSPNQTAVNSDAEDY).

The protein belongs to the major facilitator superfamily. CAR1 family.

The protein resides in the cell membrane. Its function is as follows. MFS antiporter that does not display functional linkage as drug transporter and performs functions that significantly affect biofilm development and virulence. No substrate for transport has been identified yet, but plays an important role in the growth in the host. The chain is MFS antiporter QDR1 (QDR) from Candida albicans (strain SC5314 / ATCC MYA-2876) (Yeast).